The chain runs to 436 residues: MNFFVIGVNHKTAPVEVRERFAIPESRLPEATKLLASYPGIEEGMIVSTCNRVEMVARSVNGNADMRGFLKQLYNIDPAQYEQYLYEYRSTEAVRHMFRVASSLDSMVVGEPQILGQVKEAYATARAVGAVSSQLDALLTRAFAVAKRVRTDTSIASSSVSIASVAVELAKKIFGSLQGRSVYIVGAGKMCELAARHFVAHGVEKIYVANRTYERGVAFAKKFNGEAVPIEHLYETVDKADIVLSSTGAPIAIFRKEHGEKFLSRRKNRPMFFLDIAVPRDVDAKMNELDGIFVYDIDDLQQVVHSHISDRKDEAAHAEAIVNAEVEKFEERLRTLDVVPTIVSLQEHLETVRQAEIDRLRGRLGELSPEQEMAVDALTKGIINKIMHTPITTLKTAAKEPESTTVIELVKRIFNLHEKAKDETVKTGPPQSGPGK.

Residues 49 to 52 (TCNR), serine 106, 111 to 113 (EPQ), and glutamine 117 each bind substrate. Residue cysteine 50 is the Nucleophile of the active site. 186-191 (GAGKMC) lines the NADP(+) pocket.

It belongs to the glutamyl-tRNA reductase family. As to quaternary structure, homodimer.

The catalysed reaction is (S)-4-amino-5-oxopentanoate + tRNA(Glu) + NADP(+) = L-glutamyl-tRNA(Glu) + NADPH + H(+). It functions in the pathway porphyrin-containing compound metabolism; protoporphyrin-IX biosynthesis; 5-aminolevulinate from L-glutamyl-tRNA(Glu): step 1/2. In terms of biological role, catalyzes the NADPH-dependent reduction of glutamyl-tRNA(Glu) to glutamate 1-semialdehyde (GSA). This is Glutamyl-tRNA reductase 2 from Koribacter versatilis (strain Ellin345).